Reading from the N-terminus, the 383-residue chain is Acetylornithine deacetylase (383 aa).

Position 80 (H80) interacts with Zn(2+). D82 is an active-site residue. D112 contributes to the Zn(2+) binding site. Residue E144 is part of the active site. The Zn(2+) site is built by E145, E169, and H355.

This sequence belongs to the peptidase M20A family. ArgE subfamily. Homodimer. Requires Zn(2+) as cofactor. Co(2+) is required as a cofactor. The cofactor is glutathione.

It is found in the cytoplasm. The catalysed reaction is N(2)-acetyl-L-ornithine + H2O = L-ornithine + acetate. The protein operates within amino-acid biosynthesis; L-arginine biosynthesis; L-ornithine from N(2)-acetyl-L-ornithine (linear): step 1/1. Catalyzes the hydrolysis of the amide bond of N(2)-acetylated L-amino acids. Cleaves the acetyl group from N-acetyl-L-ornithine to form L-ornithine, an intermediate in L-arginine biosynthesis pathway, and a branchpoint in the synthesis of polyamines. The protein is Acetylornithine deacetylase of Pectobacterium carotovorum subsp. carotovorum (strain PC1).